The primary structure comprises 268 residues: Ribonuclease P protein subunit p30 (268 aa).

The residue at position 2 (Ala-2) is an N-acetylalanine. Ser-251 is subject to Phosphoserine.

The protein belongs to the eukaryotic/archaeal RNase P protein component 3 family. In terms of assembly, component of nuclear RNase P and RNase MRP ribonucleoproteins. RNase P consists of a catalytic RNA moiety and about 10 protein subunits; POP1, POP4, POP5, POP7, RPP14, RPP21, RPP25, RPP30, RPP38 and RPP40. Within the RNase P complex, POP1, POP7 and RPP25 form the 'finger' subcomplex, POP5, RPP14, RPP40 and homodimeric RPP30 form the 'palm' subcomplex, and RPP21, POP4 and RPP38 form the 'wrist' subcomplex. All subunits of the RNase P complex interact with the catalytic RNA. Several subunits of RNase P are also part of the RNase MRP complex. RNase MRP consists of a catalytic RNA moiety and about 8 protein subunits; POP1, POP7, RPP25, RPP30, RPP38, RPP40 and possibly also POP4 and POP5.

The protein resides in the nucleus. Its subcellular location is the nucleolus. Component of ribonuclease P, a ribonucleoprotein complex that generates mature tRNA molecules by cleaving their 5'-ends. Also a component of the MRP ribonuclease complex, which cleaves pre-rRNA sequences. The sequence is that of Ribonuclease P protein subunit p30 (Rpp30) from Mus musculus (Mouse).